Reading from the N-terminus, the 93-residue chain is Small ribosomal subunit protein uS19 (93 aa).

The protein belongs to the universal ribosomal protein uS19 family.

In terms of biological role, protein S19 forms a complex with S13 that binds strongly to the 16S ribosomal RNA. The protein is Small ribosomal subunit protein uS19 of Acidothermus cellulolyticus (strain ATCC 43068 / DSM 8971 / 11B).